We begin with the raw amino-acid sequence, 137 residues long: MRILGLDLGKKTIGVAVSDPLGFTAQGITTIRRANKEKDMEELRKICDEYKVETIVIGLPKNMNGTIGPSGEIAMEMGKLVEEALNIKVEFWDERLTTVAAHKAMLEADLSRSKRKKIVDKVASTYILQGYLDRISK.

It belongs to the YqgF nuclease family.

The protein resides in the cytoplasm. In terms of biological role, could be a nuclease involved in processing of the 5'-end of pre-16S rRNA. This is Putative pre-16S rRNA nuclease from Clostridium botulinum (strain Eklund 17B / Type B).